A 198-amino-acid polypeptide reads, in one-letter code: Thymidine kinase (198 aa).

Residues 15–22 (GCMFSGKT) and 87–90 (DEAQ) contribute to the ATP site. Glu88 functions as the Proton acceptor in the catalytic mechanism. Cys144, Cys147, Cys182, and His185 together coordinate Zn(2+).

It belongs to the thymidine kinase family. As to quaternary structure, homotetramer.

The protein resides in the cytoplasm. The enzyme catalyses thymidine + ATP = dTMP + ADP + H(+). The sequence is that of Thymidine kinase from Coprothermobacter proteolyticus (strain ATCC 35245 / DSM 5265 / OCM 4 / BT).